The chain runs to 732 residues: E3 ubiquitin-protein ligase DCST1 (732 aa).

At 1–46 the chain is on the cytoplasmic side; it reads MAFLSSTLHSLGIFEKISRIKEVLKNRLLDLTKRRDQAREQQRKRP. A helical membrane pass occupies residues 47-67; that stretch reads HTIIQGLLLWSLPVSWIRFLW. Topologically, residues 68 to 76 are extracellular; the sequence is RQPGEFPVT. Residues 77 to 97 traverse the membrane as a helical segment; that stretch reads AFLLGAGTGGLLAIGLFQLLV. At 98–107 the chain is on the cytoplasmic side; sequence NPMNIYEEQK. The chain crosses the membrane as a helical span at residues 108 to 128; the sequence is VVALYCLASLGAIGWGTSPHI. The Extracellular segment spans residues 129 to 394; sequence RCASLLLVPK…VRDYVRQQET (266 aa). Asparagine 184, asparagine 217, asparagine 346, and asparagine 374 each carry an N-linked (GlcNAc...) asparagine glycan. The helical transmembrane segment at 395–415 threads the bilayer; that stretch reads YLQWAMGLLHVLLSCTFLLVF. Residues 416 to 489 are Cytoplasmic-facing; sequence HSAFSYMDHY…RYVIRELLET (74 aa). Residues 490–510 traverse the membrane as a helical segment; the sequence is LPIVLLLLVLCAIDWALYSVF. Topologically, residues 511 to 576 are extracellular; the sequence is DTIRQHSFVQ…PQPISLNARD (66 aa). Asparagine 551 is a glycosylation site (N-linked (GlcNAc...) asparagine). Residues 577-597 traverse the membrane as a helical segment; that stretch reads YFKASLPTLLLVCLCLAQAFG. Over 598–732 the chain is Cytoplasmic; that stretch reads YRLRRVIAAF…DSNDDAVYGD (135 aa). The segment at 672 to 711 adopts an RING-type; degenerate zinc-finger fold; the sequence is CVVCQAMETPDSYVCPTPDCKALYCRSCWDDMQRLCPVCT.

Interacts with STAT2; the interaction results in STAT2 'Lys-48'-linked ubiquitination leading to its proteasomal degradation. Interacts with DCST2. Expressed in testis.

The protein resides in the cell membrane. The protein localises to the cytoplasmic vesicle. It is found in the secretory vesicle. Its subcellular location is the acrosome membrane. It catalyses the reaction S-ubiquitinyl-[E2 ubiquitin-conjugating enzyme]-L-cysteine + [acceptor protein]-L-lysine = [E2 ubiquitin-conjugating enzyme]-L-cysteine + N(6)-ubiquitinyl-[acceptor protein]-L-lysine.. Its pathway is protein modification; protein ubiquitination. Functionally, E3 ubiquitin-protein ligase which mediates 'Lys-48'-linked ubiquitination of STAT2 and induces its proteasomal degradation thereby negatively regulating type-I-interferon signaling. In terms of biological role, essential sperm cell-surface protein required for sperm-egg fusion and fertilization. This chain is E3 ubiquitin-protein ligase DCST1 (Dcst1), found in Mus musculus (Mouse).